We begin with the raw amino-acid sequence, 839 residues long: Periplasmic nitrate reductase (839 aa).

A signal peptide (tat-type signal) is located at residues 1–34; it reads MTLTRRDFIKANAAAAAATAAAVNLPLVPSMAQA. The region spanning 46-102 is the 4Fe-4S Mo/W bis-MGD-type domain; sequence IKWDKAACRFCGTGCSVLVGTKGGRVVATQGDPDAPVNRGLNCIKGYFLSKIMYGED. Residues Cys-53, Cys-56, Cys-60, and Cys-88 each contribute to the [4Fe-4S] cluster site. Residues Lys-90, Gln-157, Asn-182, Cys-186, 219–226, 250–254, 269–271, Met-379, Gln-383, Asn-489, 515–516, Lys-538, Asp-565, and 729–738 contribute to the Mo-bis(molybdopterin guanine dinucleotide) site; these read WGSNMAEM, STYEH, QTD, SD, and TGRVLEHWHT. Position 805 (Phe-805) interacts with substrate. Residues Asn-813 and Lys-830 each coordinate Mo-bis(molybdopterin guanine dinucleotide).

Belongs to the prokaryotic molybdopterin-containing oxidoreductase family. NasA/NapA/NarB subfamily. As to quaternary structure, component of the periplasmic nitrate reductase NapAB complex composed of NapA and NapB. [4Fe-4S] cluster serves as cofactor. It depends on Mo-bis(molybdopterin guanine dinucleotide) as a cofactor. In terms of processing, predicted to be exported by the Tat system. The position of the signal peptide cleavage has not been experimentally proven.

The protein resides in the periplasm. It catalyses the reaction 2 Fe(II)-[cytochrome] + nitrate + 2 H(+) = 2 Fe(III)-[cytochrome] + nitrite + H2O. Its function is as follows. Catalytic subunit of the periplasmic nitrate reductase complex NapAB. Receives electrons from NapB and catalyzes the reduction of nitrate to nitrite. This Laribacter hongkongensis (strain HLHK9) protein is Periplasmic nitrate reductase.